The sequence spans 1227 residues: MKLKEIDRTAMQAWSPAQQHPIYLATGTSAQQLDASFSTNASLEIFELDLSDPSLDMKSCATFSSAHRYHKLIWGPHSMTAGERVSGVLIAGGENGNVILYDPAKIIAGDTEVIIAQKDKHTGPVRALDVNMFQTNLVASGANESEIYIWDLNNFATPMTPGAKTQPLEDISCIAWNRQVQHILASASPSGRATVWDLRKNEPIIKVSDHNNRMHCSGLAWHPDVATQMVLASEDDRLPVIQMWDLRFTSSPLRVLESHTRGILAIAWSMADSELLLSCGKDAKILCSNPNTGEVLYELPTNMQWCFDIQWCPRNPAILSAASFDGRLRIYSIMGGSTDGLRQKHVDQLSSSFGNLDPFGTGQPLPPLQLPQQTAPQSVVLPLKKPPKWIRRPVGASFSFGGKLVTFENAKPQQQPGIDQQPQHHYVYVSQVVTEKEFLARSTQLQEAVQSEGFVSYCQKKVDMAQADFERNVWSFLKVNFEEDSRAKYLELLGYRKDDLKNKITSALNLNKECCADGELGEAPTESDVPLLNKGDEGQTAEEHFLGERAKDSKQETEDLGSERKTFNISVSGDVDGLITQALLTGNFESAVDLCLHDNRMADAIILAIAGGQELLSRTQEKYFSKIQSKITRLITAVVTKNWKEIVLSCDLQNWREALAAVLTYARPDEFAALCDLLGNRLESEGDSLLRTQACLCYICAGNVEKLVACWSKVQDGNSPLSLQDLIEKVVILRKAVQLTQAVDPNAVGALLAEKMSQYANLLAAQGSIAAALTFLPANTDQPDIVLLRDRLCRAQGELPAGQEAIKAPYERQPMPKDRAGPVAGQVPGPQASAQQYYQQGDKPPPPGFIMPGAINPSAPPQQATSPSYNMYSQAGTRPAYPQTYQTTQQYSFGTGETALYQPQQPVAAPASASYPSPASNTNPPYLPAAQPVPSPLYPGQPQPSPTSLNPASSFPPPPSGASFQHGRPGLPATSVAYALPTGPTGTLPAASDLPASQRTGPQNGWNDPPALNRAAKKKKVPDNFMPPVPITSPIMNPLADPQAQMQQPPAAPVGTPSFQPQQLSTGQQAPLGPYAPQALGPCVVPPTTFKPRTEGAPGAPIGNAIQALPTEKITKKPIPEEHLILKTTFEALIQRCLLSASDPQTKRKLDDANKRLEFLYDKLREQTLSPAIVSGLHNIVKSIETRNYVEGLNIHMHIVSTSNFSETSAFMPVLKVVLIQANKLGV.

7 WD repeats span residues 4-47, 64-111, 120-160, 166-206, 209-254, 258-298, and 301-342; these read KEID…EIFE, SSAH…AGDT, KHTG…TPMT, QPLE…PIIK, DHNN…SPLR, SHTR…VLYE, and TNMQ…DGLR. Residues 397 to 430 form a WD 8; interaction with SEC13 repeat; it reads SFSFGGKLVTFENAKPQQQPGIDQQPQHHYVYVS. Disordered stretches follow at residues 804–875, 905–1008, and 1040–1075; these read EAIK…YSQA, QPVA…GWND, and ADPQ…LGPY. Positions 905-924 are enriched in low complexity; that stretch reads QPVAAPASASYPSPASNTNP. Over residues 925–945 the composition is skewed to pro residues; it reads PYLPAAQPVPSPLYPGQPQPS. The segment covering 995 to 1006 has biased composition (polar residues); it reads PASQRTGPQNGW. The span at 1040–1049 shows a compositional bias: low complexity; sequence ADPQAQMQQP. Polar residues predominate over residues 1057–1069; the sequence is PSFQPQQLSTGQQ.

This sequence belongs to the WD repeat SEC31 family. As to quaternary structure, COPII is composed of at least 5 proteins: the SEC23/24 complex, the SEC13/31 complex and SAR1. SEC13 and SEC31 make a 2:2 tetramer that forms the edge element of the COPII outer coat. The tetramer self-assembles in multiple copies to form the complete polyhedral cage. Interacts (via WD 8) with SEC13.

The protein resides in the cytoplasm. Its subcellular location is the cytoplasmic vesicle. It localises to the COPII-coated vesicle membrane. It is found in the endoplasmic reticulum membrane. Component of the coat protein complex II (COPII) which promotes the formation of transport vesicles from the endoplasmic reticulum (ER). The coat has two main functions, the physical deformation of the endoplasmic reticulum membrane into vesicles and the selection of cargo molecules. This Gallus gallus (Chicken) protein is Protein transport protein Sec31A (SEC31A).